Consider the following 346-residue polypeptide: Protein RecA (346 aa).

An ATP-binding site is contributed by 68–75 (GPESSGKT).

Belongs to the RecA family.

The protein resides in the cytoplasm. In terms of biological role, can catalyze the hydrolysis of ATP in the presence of single-stranded DNA, the ATP-dependent uptake of single-stranded DNA by duplex DNA, and the ATP-dependent hybridization of homologous single-stranded DNAs. It interacts with LexA causing its activation and leading to its autocatalytic cleavage. This chain is Protein RecA, found in Heliobacterium modesticaldum (strain ATCC 51547 / Ice1).